The chain runs to 55 residues: Metallothionein-3 (55 aa).

The protein belongs to the metallothionein superfamily. Type 11 family.

This chain is Metallothionein-3 (MTP3), found in Yarrowia lipolytica (strain CLIB 122 / E 150) (Yeast).